The sequence spans 508 residues: MELDSALEAPSQEDSNLSEELSHSAFGQAFSKILHCLARPEARRGNVKDAVLKDLGDLIEATEFDRLFEGTGARLRGMPETLGQVAKALEKYAAPSKEEEGGGDGHSEAAEKAAQVGLLFLKLLGKVETAKNSLVGPAWQTGLHHLAGPVYIFAITHSLEQPWTTPRSREVAREVLTSLLQVTECGSVAGFLHGENEDEKGRLSVILGLLKPDLYKESWKNNPAIKHVFSWTLQQVTRPWLSQHLERVLPASLVISDDYQTENKILGVHCLHHIVLNVPAADLLQYNRAQVLYHAISNHLYTPEHHLIQAVLLCLLDLFPILEKTLHWKGDGARPTTHCDEVLRLILTHMEPEHRLLLRRTYARNLPAFVNRLGILTVRHLKRLERVIIGYLEVYDGPEEEARLKILETLKLLMQHTWPRVSCRLVVLLKALLKLICDVARDPNLTPESVKSALLQEATDCLILLDRCSQGRVKGLLAKIPQSCEDRKVVNYIRKVQQVSEGAPYNGT.

The disordered stretch occupies residues 1–20 (MELDSALEAPSQEDSNLSEE).

This sequence belongs to the TTI2 family. In terms of assembly, component of the TTT complex composed of TELO2, TTI1 and TTI2. Interacts with TELO2 and TTI1. Interacts with WAC; WAC positively regulates MTOR activity by promoting the assembly of the TTT complex and the RUVBL complex composed of RUVBL1 and RUVBL2 into the TTT-RUVBL complex which leads to the dimerization of the mTORC1 complex and its subsequent activation.

Functionally, regulator of the DNA damage response (DDR). Part of the TTT complex that is required to stabilize protein levels of the phosphatidylinositol 3-kinase-related protein kinase (PIKK) family proteins. The TTT complex is involved in the cellular resistance to DNA damage stresses, like ionizing radiation (IR), ultraviolet (UV) and mitomycin C (MMC). Together with the TTT complex and HSP90 may participate in the proper folding of newly synthesized PIKKs. The chain is TELO2-interacting protein 2 (TTI2) from Homo sapiens (Human).